Consider the following 206-residue polypeptide: Large ribosomal subunit protein uL4 (206 aa).

The segment covering 43-52 has biased composition (polar residues); sequence NKRQGTQSAK. The segment at 43–86 is disordered; the sequence is NKRQGTQSAKTRAEVSGGGRKPWRQKGTGHARQGSTRSPQWKGG.

The protein belongs to the universal ribosomal protein uL4 family. As to quaternary structure, part of the 50S ribosomal subunit.

Functionally, one of the primary rRNA binding proteins, this protein initially binds near the 5'-end of the 23S rRNA. It is important during the early stages of 50S assembly. It makes multiple contacts with different domains of the 23S rRNA in the assembled 50S subunit and ribosome. In terms of biological role, forms part of the polypeptide exit tunnel. This Lachnoclostridium phytofermentans (strain ATCC 700394 / DSM 18823 / ISDg) (Clostridium phytofermentans) protein is Large ribosomal subunit protein uL4.